The sequence spans 339 residues: Anthranilate phosphoribosyltransferase (339 aa).

Residues Gly-79, 82–83, Ser-87, 89–92, 107–115, and Ser-119 each bind 5-phospho-alpha-D-ribose 1-diphosphate; these read GD, NIST, and KHGNRSISS. Gly-79 contributes to the anthranilate binding site. Mg(2+) is bound at residue Ser-91. Asn-110 is an anthranilate binding site. Arg-165 lines the anthranilate pocket. Asp-224 and Glu-225 together coordinate Mg(2+).

The protein belongs to the anthranilate phosphoribosyltransferase family. Homodimer. Mg(2+) serves as cofactor.

The enzyme catalyses N-(5-phospho-beta-D-ribosyl)anthranilate + diphosphate = 5-phospho-alpha-D-ribose 1-diphosphate + anthranilate. Its pathway is amino-acid biosynthesis; L-tryptophan biosynthesis; L-tryptophan from chorismate: step 2/5. Functionally, catalyzes the transfer of the phosphoribosyl group of 5-phosphorylribose-1-pyrophosphate (PRPP) to anthranilate to yield N-(5'-phosphoribosyl)-anthranilate (PRA). This chain is Anthranilate phosphoribosyltransferase, found in Listeria monocytogenes serotype 4a (strain HCC23).